Consider the following 103-residue polypeptide: Small ribosomal subunit protein uS10 (103 aa).

The protein belongs to the universal ribosomal protein uS10 family. In terms of assembly, part of the 30S ribosomal subunit.

Its function is as follows. Involved in the binding of tRNA to the ribosomes. In Borrelia duttonii (strain Ly), this protein is Small ribosomal subunit protein uS10.